Consider the following 439-residue polypeptide: Trigger factor (439 aa).

Residues 162–247 (GDRLTLDFIG…LKKVEAMILP (86 aa)) form the PPIase FKBP-type domain.

Belongs to the FKBP-type PPIase family. Tig subfamily.

It localises to the cytoplasm. The catalysed reaction is [protein]-peptidylproline (omega=180) = [protein]-peptidylproline (omega=0). In terms of biological role, involved in protein export. Acts as a chaperone by maintaining the newly synthesized protein in an open conformation. Functions as a peptidyl-prolyl cis-trans isomerase. In Dichelobacter nodosus (strain VCS1703A), this protein is Trigger factor.